Reading from the N-terminus, the 871-residue chain is Nonsense-mediated mRNA decay factor SMG8 (871 aa).

Residues 541-596 are disordered; sequence LDDMELPESLQQSYTSSEDSSEDDDDFAIQTASSEDSLSGSDSYARPGSRRDEFES. Positions 573 to 583 are enriched in low complexity; sequence SSEDSLSGSDS.

This sequence belongs to the SMG8 family.

In terms of biological role, involved in nonsense-mediated decay (NMD) of mRNAs containing premature stop codons. Probable component of kinase complex containing smg-1 and recruited to stalled ribosomes. The chain is Nonsense-mediated mRNA decay factor SMG8 (smg-8) from Caenorhabditis briggsae.